The following is a 602-amino-acid chain: Beta-(1--&gt;2)glucan export ATP-binding/permease protein NdvA (602 aa).

The region spanning 21–306 (GWLLAFANLL…VVSFINNVFM (286 aa)) is the ABC transmembrane type-1 domain. The next 6 membrane-spanning stretches (helical) occupy residues 22-42 (WLLA…PVLF), 63-83 (FLAA…LVAL), 141-161 (EHFA…YLNW), 163-183 (LAIL…FVVR), 240-262 (VLSW…VLAI), and 280-300 (IVMF…VVSF). The ABC transporter domain maps to 340–573 (VEFNDVTFSY…GGHFAELARA (234 aa)). 373 to 380 (GPTGAGKS) provides a ligand contact to ATP.

Belongs to the ABC transporter superfamily. Beta-(1--&gt;2)glucan exporter (TC 3.A.1.108.1) family. Homodimer.

Its subcellular location is the cell inner membrane. The catalysed reaction is [(1-&gt;2)-beta-D-glucosyl](n)(in) + ATP + H2O = [(1-&gt;2)-beta-D-glucosyl](n)(out) + ADP + phosphate + H(+). Its function is as follows. Involved in beta-(1--&gt;2)glucan export. Transmembrane domains (TMD) form a pore in the inner membrane and the ATP-binding domain (NBD) is responsible for energy generation. The protein is Beta-(1--&gt;2)glucan export ATP-binding/permease protein NdvA of Bradyrhizobium diazoefficiens (strain JCM 10833 / BCRC 13528 / IAM 13628 / NBRC 14792 / USDA 110).